We begin with the raw amino-acid sequence, 436 residues long: tRNA pseudouridine synthase Pus10 (436 aa).

Asp-254 functions as the Nucleophile in the catalytic mechanism. Substrate is bound by residues Tyr-322 and Tyr-394.

Belongs to the pseudouridine synthase Pus10 family.

It catalyses the reaction uridine(54) in tRNA = pseudouridine(54) in tRNA. It carries out the reaction uridine(55) in tRNA = pseudouridine(55) in tRNA. Responsible for synthesis of pseudouridine from uracil-54 and uracil-55 in the psi GC loop of transfer RNAs. The sequence is that of tRNA pseudouridine synthase Pus10 from Methanopyrus kandleri (strain AV19 / DSM 6324 / JCM 9639 / NBRC 100938).